Consider the following 33-residue polypeptide: Large ribosomal subunit protein eL21 (33 aa).

It belongs to the eukaryotic ribosomal protein eL21 family. In terms of assembly, component of the large ribosomal subunit.

Its subcellular location is the cytoplasm. The protein localises to the cytosol. The protein resides in the endoplasmic reticulum. In terms of biological role, component of the large ribosomal subunit. The ribosome is a large ribonucleoprotein complex responsible for the synthesis of proteins in the cell. This chain is Large ribosomal subunit protein eL21 (rpl21), found in Xenopus laevis (African clawed frog).